The following is a 149-amino-acid chain: Pleckstrin homology domain-containing family J member 1 (149 aa).

One can recognise a PH domain in the interval 15–108 (PAEKAAEILM…WIEALKRASY (94 aa)).

This Gallus gallus (Chicken) protein is Pleckstrin homology domain-containing family J member 1 (PLEKHJ1).